Here is a 318-residue protein sequence, read N- to C-terminus: Pheromone-regulated membrane protein 5 (318 aa).

A helical membrane pass occupies residues F78–I98. S129 is subject to Phosphoserine. Positions T238–L247 are enriched in low complexity. Positions T238–E318 are disordered. A compositionally biased stretch (basic and acidic residues) spans G250–K261. A compositionally biased stretch (polar residues) spans S276–R285. Phosphoserine is present on residues S279, S282, and S288. Residues H309 to E318 are compositionally biased toward basic and acidic residues. Residue K314 forms a Glycyl lysine isopeptide (Lys-Gly) (interchain with G-Cter in ubiquitin) linkage.

It belongs to the PRM5 family.

It localises to the membrane. The polypeptide is Pheromone-regulated membrane protein 5 (PRM5) (Saccharomyces cerevisiae (strain Lalvin EC1118 / Prise de mousse) (Baker's yeast)).